The chain runs to 286 residues: uncharacterized protein (286 aa).

The interval 1–47 (MAIPFLHKGGSDDSTHHHTHDYDHHNHDHHGHDHHSHDSSSNSSSEA) is disordered. The span at 9-26 (GGSDDSTHHHTHDYDHHN) shows a compositional bias: basic and acidic residues. 93–100 (GPVGSGKT) is a binding site for GTP.

This sequence belongs to the SIMIBI class G3E GTPase family. UreG subfamily.

The protein resides in the cytoplasm. It is found in the nucleus. In terms of biological role, probably facilitates nickel incorporation. This is an uncharacterized protein from Schizosaccharomyces pombe (strain 972 / ATCC 24843) (Fission yeast).